We begin with the raw amino-acid sequence, 61 residues long: UPF0434 protein TM1040_0056 (61 aa).

The protein belongs to the UPF0434 family.

This Ruegeria sp. (strain TM1040) (Silicibacter sp.) protein is UPF0434 protein TM1040_0056.